The chain runs to 348 residues: Heat-inducible transcription repressor HrcA (348 aa).

Belongs to the HrcA family.

Functionally, negative regulator of class I heat shock genes (grpE-dnaK-dnaJ and groELS operons). Prevents heat-shock induction of these operons. The polypeptide is Heat-inducible transcription repressor HrcA (Lacticaseibacillus casei (strain BL23) (Lactobacillus casei)).